Reading from the N-terminus, the 647-residue chain is 1-deoxy-D-xylulose-5-phosphate synthase (647 aa).

Thiamine diphosphate contacts are provided by residues His-88 and 129–131 (GHA). Position 160 (Asp-160) interacts with Mg(2+). Residues 161–162 (GA), Asn-189, Tyr-300, and Glu-377 contribute to the thiamine diphosphate site. Mg(2+) is bound at residue Asn-189.

This sequence belongs to the transketolase family. DXPS subfamily. Homodimer. It depends on Mg(2+) as a cofactor. Thiamine diphosphate is required as a cofactor.

The enzyme catalyses D-glyceraldehyde 3-phosphate + pyruvate + H(+) = 1-deoxy-D-xylulose 5-phosphate + CO2. Its pathway is metabolic intermediate biosynthesis; 1-deoxy-D-xylulose 5-phosphate biosynthesis; 1-deoxy-D-xylulose 5-phosphate from D-glyceraldehyde 3-phosphate and pyruvate: step 1/1. Catalyzes the acyloin condensation reaction between C atoms 2 and 3 of pyruvate and glyceraldehyde 3-phosphate to yield 1-deoxy-D-xylulose-5-phosphate (DXP). The chain is 1-deoxy-D-xylulose-5-phosphate synthase from Dehalococcoides mccartyi (strain ATCC BAA-2266 / KCTC 15142 / 195) (Dehalococcoides ethenogenes (strain 195)).